Reading from the N-terminus, the 496-residue chain is Genome polyprotein (496 aa).

Residues 1–447 (SRCTHLENRD…HTVLGGAFNS (447 aa)) are Extracellular-facing. 6 disulfides stabilise this stretch: Cys-3-Cys-30, Cys-60-Cys-116, Cys-60-Cys-121, Cys-74-Cys-105, Cys-92-Cys-116, and Cys-92-Cys-121. The interval 98 to 111 (DRGWGNHCGLFGKG) is fusion peptide. Asn-154 is a glycosylation site (N-linked (GlcNAc...) asparagine; by host). Disulfide bonds link Cys-186-Cys-290 and Cys-307-Cys-338. The helical transmembrane segment at 448-468 (IFGGVGFLPKLLMGVALAWLG) threads the bilayer. Residues 469–479 (LNTRNPTMSMS) are Cytoplasmic-facing. Residues 480–496 (FLLAGGLVLAMTLGVGA) traverse the membrane as a helical segment.

In terms of assembly, homodimer; in the endoplasmic reticulum and Golgi. N-glycosylated.

It is found in the virion membrane. The protein resides in the host endoplasmic reticulum membrane. In terms of biological role, binds to host cell surface receptor and mediates fusion between viral and cellular membranes. Envelope protein is synthesized in the endoplasmic reticulum in the form of heterodimer with protein prM. They play a role in virion budding in the ER, and the newly formed immature particle is covered with 60 spikes composed of heterodimer between precursor prM and envelope protein E. The virion is transported to the Golgi apparatus where the low pH causes dissociation of PrM-E heterodimers and formation of E homodimers. prM-E cleavage is ineficient, and many virions are only partially matured. These uncleaved prM would play a role in immune evasion. The polypeptide is Genome polyprotein (Bos taurus (Bovine)).